The primary structure comprises 363 residues: Ribosome-binding ATPase YchF (363 aa).

Residues 3 to 257 (FKCGFVGLPN…VSAYDHLSLK (255 aa)) enclose the OBG-type G domain. 12 to 17 (NVGKST) provides a ligand contact to ATP. 2 residues coordinate Mg(2+): Ser-16 and Thr-36. A TGS domain is found at 278 to 361 (NLITFFTAGK…CDGDIIHVLY (84 aa)).

Belongs to the TRAFAC class OBG-HflX-like GTPase superfamily. OBG GTPase family. YchF/OLA1 subfamily. The cofactor is Mg(2+).

Its function is as follows. ATPase that binds to both the 70S ribosome and the 50S ribosomal subunit in a nucleotide-independent manner. The polypeptide is Ribosome-binding ATPase YchF (Buchnera aphidicola subsp. Baizongia pistaciae (strain Bp)).